The chain runs to 256 residues: Small ribosomal subunit protein eS1 (256 aa).

The residue at position 2 (A2) is an N-acetylalanine; partial.

Belongs to the eukaryotic ribosomal protein eS1 family. In terms of assembly, component of the small ribosomal subunit. Mature ribosomes consist of a small (40S) and a large (60S) subunit. The 40S subunit contains about 33 different proteins and 1 molecule of RNA (18S). The 60S subunit contains about 49 different proteins and 3 molecules of RNA (25S, 5.8S and 5S).

Its subcellular location is the cytoplasm. The polypeptide is Small ribosomal subunit protein eS1 (Lachancea thermotolerans (strain ATCC 56472 / CBS 6340 / NRRL Y-8284) (Yeast)).